We begin with the raw amino-acid sequence, 343 residues long: 4-hydroxy-2-oxovalerate aldolase 4 (343 aa).

A Pyruvate carboxyltransferase domain is found at 8–260 (VTVHDMTLRD…ETGVDVAKIT (253 aa)). 16–17 (RD) contacts substrate. Mn(2+) is bound at residue Asp17. His20 acts as the Proton acceptor in catalysis. Substrate contacts are provided by Ser170 and His199. The Mn(2+) site is built by His199 and His201. Residue Tyr290 coordinates substrate.

This sequence belongs to the 4-hydroxy-2-oxovalerate aldolase family.

It carries out the reaction (S)-4-hydroxy-2-oxopentanoate = acetaldehyde + pyruvate. The sequence is that of 4-hydroxy-2-oxovalerate aldolase 4 from Dechloromonas aromatica (strain RCB).